A 468-amino-acid polypeptide reads, in one-letter code: Putative BTB/POZ domain and WD-repeat protein R154 (468 aa).

The BTB domain occupies 14 to 85 (SDLQLIVEDS…FYGIDDKLPE (72 aa)). WD repeat units follow at residues 194 to 233 (HHSE…IIFN), 354 to 398 (DEIG…LVKS), and 401 to 440 (LFDV…IIYT).

The protein belongs to the mimivirus BTB/WD family.

The polypeptide is Putative BTB/POZ domain and WD-repeat protein R154 (Acanthamoeba polyphaga (Amoeba)).